The primary structure comprises 444 residues: Nuclear envelope integral membrane protein 1 (444 aa).

Residues 1–43 (MAGGMKVAVSPAVGPGPWGSGVGGGGTVRLLLILSGCLVYGTA) form the signal peptide. A glycan (N-linked (GlcNAc...) asparagine) is linked at asparagine 125. 5 consecutive transmembrane segments (helical) span residues 161–181 (PKLF…DLLS), 186–206 (FYYS…IIFI), 216–236 (PIYV…QLVF), 245–265 (CYWQ…FAVC), and 289–309 (LCFM…IIIA). The segment at 186 to 297 (FYYSTGMSVG…GLCFMYSGIQ (112 aa)) is a; required for its colocalization with lamins at the nuclear envelope. The interval 336–405 (PVPPRLLTEE…LTPNEVSVHE (70 aa)) is b; required for interaction with RAN-GTP. Positions 336-444 (PVPPRLLTEE…PAITQNNFLT (109 aa)) are required for nuclear localization. A phosphoserine mark is found at serine 368, serine 424, and serine 425.

This sequence belongs to the NEMP family. In terms of assembly, homooligomer. Interacts with RAN-GTP. Interacts with EMD. Post-translationally, phosphorylation may regulate its interaction with RAN-GTP.

Its subcellular location is the nucleus inner membrane. It is found in the nucleus envelope. Functionally, together with EMD, contributes to nuclear envelope stiffness in germ cells. Required for female fertility. Essential for normal erythropoiesis. Required for efficient nuclear envelope opening and enucleation during the late stages of erythroblast maturation. This Pongo abelii (Sumatran orangutan) protein is Nuclear envelope integral membrane protein 1 (NEMP1).